A 28-amino-acid chain; its full sequence is Omega-agatoxin-Aa2a (28 aa).

Belongs to the neurotoxin 04 (omega-agtx) family. 03 (type II/III omega-agtx) subfamily. As to expression, expressed by the venom gland.

The protein resides in the secreted. Functionally, omega-agatoxin are antagonist of voltage-gated calcium channels. They block insect neuromuscular transmission presynaptically. Potent blocker of N-type calcium channels (Cav2.2/CACNA1B). The polypeptide is Omega-agatoxin-Aa2a (Agelenopsis aperta (North American funnel-web spider)).